The chain runs to 118 residues: Beta-2-microglobulin (118 aa).

The N-terminal stretch at 1 to 20 is a signal peptide; the sequence is MARFVALVLLGLLSLSGLDA. One can recognise an Ig-like C1-type domain in the interval 25 to 112; the sequence is PKIQVYSRHP…HVTLEQPRIV (88 aa). C45 and C99 form a disulfide bridge.

This sequence belongs to the beta-2-microglobulin family. In terms of assembly, heterodimer of an alpha chain and a beta chain. Beta-2-microglobulin is the beta-chain of major histocompatibility complex class I molecules. Forms a heterotrimer with MR1 and a metabolite antigen.

The protein resides in the secreted. Component of the class I major histocompatibility complex (MHC). Involved in the presentation of peptide antigens to the immune system. The protein is Beta-2-microglobulin (B2M) of Bos taurus (Bovine).